Consider the following 184-residue polypeptide: MKNITDSFLCLGSWPSAGSFVFNTDILATNPINLSVVLGVLVFFGKGVLSDLLDNRKQKIWRTIQNSEELQEEAIEQLEKAQARLRKVETEADRFRVNGYSEIKREKLNLIHSIYTTLEQLENYKNEAIDFEQQRVINQVRQRVLQQALQGALGTLNSCLNNELHLRTVSANIGMFGTMKEKNN.

Residues 27–49 form a helical membrane-spanning segment; sequence LATNPINLSVVLGVLVFFGKGVL.

This sequence belongs to the ATPase B chain family. As to quaternary structure, F-type ATPases have 2 components, F(1) - the catalytic core - and F(0) - the membrane proton channel. F(1) has five subunits: alpha(3), beta(3), gamma(1), delta(1), epsilon(1). F(0) has four main subunits: a(1), b(1), b'(1) and c(10-14). The alpha and beta chains form an alternating ring which encloses part of the gamma chain. F(1) is attached to F(0) by a central stalk formed by the gamma and epsilon chains, while a peripheral stalk is formed by the delta, b and b' chains.

The protein localises to the plastid. The protein resides in the chloroplast thylakoid membrane. In terms of biological role, f(1)F(0) ATP synthase produces ATP from ADP in the presence of a proton or sodium gradient. F-type ATPases consist of two structural domains, F(1) containing the extramembraneous catalytic core and F(0) containing the membrane proton channel, linked together by a central stalk and a peripheral stalk. During catalysis, ATP synthesis in the catalytic domain of F(1) is coupled via a rotary mechanism of the central stalk subunits to proton translocation. Its function is as follows. Component of the F(0) channel, it forms part of the peripheral stalk, linking F(1) to F(0). This is ATP synthase subunit b, chloroplastic from Phaseolus vulgaris (Kidney bean).